A 138-amino-acid chain; its full sequence is MKIDIHSHILPKEWPDLKKRFGYXGWVELQHHSEGEAKMLKDGKVFRVVQERFVGLGTLPMQAPXSLFVHPWDMQYWFPWLIGMPAETTTAXESMMMGGVFEKVXFAHGGGSFPFTVGRIVILGTDYPFPLGELEPGK.

The Zn(2+) site is built by histidine 6 and histidine 8. Arginine 47 is a substrate binding site. The Zn(2+) site is built by histidine 70 and aspartate 126.

The protein belongs to the metallo-dependent hydrolases superfamily. ACMSD family. Monomer.

It carries out the reaction 2-amino-3-carboxymuconate 6-semialdehyde + H(+) = 2-aminomuconate 6-semialdehyde + CO2. It functions in the pathway secondary metabolite metabolism; quinolate metabolism. Functionally, converts alpha-amino-beta-carboxymuconate-epsilon-semialdehyde (ACMS) to alpha-aminomuconate semialdehyde (AMS). ACMS can be converted non-enzymatically to quinolate (QA), a key precursor of NAD, and a potent endogenous excitotoxin of neuronal cells which is implicated in the pathogenesis of various neurodegenerative disorders. In the presence of ACMSD, ACMS is converted to AMS, a benign catabolite. ACMSD ultimately controls the metabolic fate of tryptophan catabolism along the kynurenine pathway. The protein is 2-amino-3-carboxymuconate-6-semialdehyde decarboxylase (ACMSD) of Sus scrofa (Pig).